We begin with the raw amino-acid sequence, 496 residues long: N-acetylmuramoyl-L-alanine amidase LytC (496 aa).

Residues 1 to 24 (MRSYIKVLTMCFLGLILFVPTALA) form the signal peptide. 3 repeat units span residues 30–128 (RVGG…ISIK), 129–222 (RIAG…PSPT), and 223–318 (RISG…NPVV). Positions 30–318 (RVGGSNRYGT…VANQLKNPVV (289 aa)) are 3 X tandem repeats. The region spanning 322–490 (IFIDPGHGDQ…DKAAQAIHDG (169 aa)) is the MurNAc-LAA domain.

Belongs to the N-acetylmuramoyl-L-alanine amidase 3 family.

It is found in the secreted. The protein localises to the cell wall. The enzyme catalyses Hydrolyzes the link between N-acetylmuramoyl residues and L-amino acid residues in certain cell-wall glycopeptides.. Functionally, autolysins are cell wall hydrolases involved in some important biological processes such as cell separation, cell-wall turnover, competence for genetic transformation, formation of the flagella - in particular of its basal body - and sporulation. Has a high affinity for teichoic acid-endowed peptidoglycan. LytC is required for efficient swarming motility but not at the level of cell separation or flagellum biosynthesis. Rather, LytC appears to be important for proper flagellar function. The protein is N-acetylmuramoyl-L-alanine amidase LytC (lytC) of Bacillus subtilis (strain 168).